A 211-amino-acid chain; its full sequence is tRNA (guanine-N(7)-)-methyltransferase (211 aa).

The S-adenosyl-L-methionine site is built by Glu43, Glu68, Asp95, and Asp117. Asp117 is a catalytic residue. Substrate is bound by residues Lys121, Asp153, and 190–193; that span reads TEYE.

Belongs to the class I-like SAM-binding methyltransferase superfamily. TrmB family.

The catalysed reaction is guanosine(46) in tRNA + S-adenosyl-L-methionine = N(7)-methylguanosine(46) in tRNA + S-adenosyl-L-homocysteine. Its pathway is tRNA modification; N(7)-methylguanine-tRNA biosynthesis. In terms of biological role, catalyzes the formation of N(7)-methylguanine at position 46 (m7G46) in tRNA. This chain is tRNA (guanine-N(7)-)-methyltransferase, found in Staphylococcus carnosus (strain TM300).